Here is a 374-residue protein sequence, read N- to C-terminus: Tetraacyldisaccharide 4'-kinase (374 aa).

Position 43-50 (threonine 43–threonine 50) interacts with ATP.

The protein belongs to the LpxK family.

It catalyses the reaction a lipid A disaccharide + ATP = a lipid IVA + ADP + H(+). The protein operates within glycolipid biosynthesis; lipid IV(A) biosynthesis; lipid IV(A) from (3R)-3-hydroxytetradecanoyl-[acyl-carrier-protein] and UDP-N-acetyl-alpha-D-glucosamine: step 6/6. Transfers the gamma-phosphate of ATP to the 4'-position of a tetraacyldisaccharide 1-phosphate intermediate (termed DS-1-P) to form tetraacyldisaccharide 1,4'-bis-phosphate (lipid IVA). The protein is Tetraacyldisaccharide 4'-kinase of Leptospira biflexa serovar Patoc (strain Patoc 1 / Ames).